A 283-amino-acid polypeptide reads, in one-letter code: Non-selective voltage-gated ion channel VDAC1 (283 aa).

Alanine 2 carries the N-acetylalanine modification. Lysine 12 lines the ATP pocket. Lysine 12 participates in a covalent cross-link: Glycyl lysine isopeptide (Lys-Gly) (interchain with G-Cter in ubiquitin). The residue at position 13 (serine 13) is a Phosphoserine. Position 19 is a phosphothreonine (threonine 19). Position 20 (lysine 20) interacts with ATP. Residue lysine 20 is modified to N6-acetyllysine; alternate. N6-succinyllysine; alternate is present on lysine 20. Lysine 20 participates in a covalent cross-link: Glycyl lysine isopeptide (Lys-Gly) (interchain with G-Cter in ubiquitin); alternate. 2 consecutive transmembrane segments (beta stranded) span residues 26–35 (LIKLDLKTKS) and 39–47 (LEFTSSGSA). Residues lysine 53 and lysine 61 each participate in a glycyl lysine isopeptide (Lys-Gly) (interchain with G-Cter in ubiquitin) cross-link. The beta stranded transmembrane segment at 54–64 (VTGSLETKYRW) threads the bilayer. Phosphotyrosine is present on tyrosine 67. Transmembrane regions (beta stranded) follow at residues 69-76 (LTFTEKWN), 80-89 (TLGTEITVED), and 95-104 (LKLTFDSSFS). Threonine 107 is modified (phosphothreonine). Lysine 109 carries the N6-acetyllysine; alternate modification. Residue lysine 109 forms a Glycyl lysine isopeptide (Lys-Gly) (interchain with G-Cter in ubiquitin); alternate linkage. Lysine 110 is covalently cross-linked (Glycyl lysine isopeptide (Lys-Gly) (interchain with G-Cter in ubiquitin)). The next 4 beta stranded transmembrane spans lie at 111 to 120 (NAKIKTGYKR), 123 to 130 (VNLGCDVD), 137 to 145 (SIRGALVLG), and 150 to 158 (LAGYQMNFE). Lysine 161 is covalently cross-linked (Glycyl lysine isopeptide (Lys-Gly) (interchain with G-Cter in ubiquitin)). The next 6 membrane-spanning stretches (beta stranded) occupy residues 163-175 (RVTQ…GYKT), 178-185 (FQLHTNVN), 189-198 (EFGGSIYQKV), 202-211 (LETAVNLAWT), 218-227 (RFGIAAKYQI), and 231-238 (ACFSAKVN). Serine 193 is subject to Phosphoserine; by NEK1. Residue serine 240 is modified to Phosphoserine. Position 242–244 (242–244 (LIG)) interacts with NAD(+). The beta stranded transmembrane segment at 242 to 251 (LIGLGYTQTL) threads the bilayer. N6-acetyllysine is present on lysine 252. The beta stranded transmembrane segment at 254-263 (GIKLTLSALL) threads the bilayer. 260–264 (SALLD) is an NAD(+) binding site. The residue at position 266 (lysine 266) is an N6-acetyllysine; alternate. Lysine 266 is covalently cross-linked (Glycyl lysine isopeptide (Lys-Gly) (interchain with G-Cter in ubiquitin); alternate). The beta stranded transmembrane segment at 273–282 (HKLGLGLEFQ) threads the bilayer. A Glycyl lysine isopeptide (Lys-Gly) (interchain with G-Cter in ubiquitin) cross-link involves residue lysine 274.

This sequence belongs to the eukaryotic mitochondrial porin family. As to quaternary structure, homodimer and homotrimer; in response to cyclic AMP or calcium; oligomerization is required for scramblase activity. Component of the mitochondrial permeability transition pore complex (mPTPC), at least composed of SPG7, VDAC1 and PPIF. Interacts with SPG7, NIPSNAP2 and SLC25A30. Interacts with hexokinases including HK1. The HK1-VDAC1 complex interacts with ATF2. Interacts with BCL2L1. Interacts with BAK1. Interacts with RTL10/BOP (via BH3 domain). Interacts with amyloid-beta and APP; induces VDAC1 dephosphorylation. Interacts with TMEM41B. Interacts with BCAP31. Interacts with HSPA9; this interaction couples ITPR1 to VDAC1. Phosphorylation at Ser-193 by NEK1 promotes the closed conformational state preventing excessive mitochondrial membrane permeability and subsequent apoptotic cell death after injury. Phosphorylation by the AKT-GSK3B axis stabilizes the protein probably by preventing ubiquitin-mediated proteasomal degradation. Post-translationally, ubiquitinated. Undergoes monoubiquitination and polyubiquitination by PRKN; monoubiquitination at Lys-274 inhibits apoptosis, whereas polyubiquitination leads to its degradation and promotes mitophagy. Deubiquitinated by USP30.

Its subcellular location is the mitochondrion outer membrane. It localises to the cell membrane. The protein localises to the membrane raft. The enzyme catalyses chloride(in) = chloride(out). The catalysed reaction is K(+)(in) = K(+)(out). It catalyses the reaction ATP(in) = ATP(out). It carries out the reaction Ca(2+)(in) = Ca(2+)(out). The enzyme catalyses Na(+)(in) = Na(+)(out). The catalysed reaction is Mg(2+)(in) = Mg(2+)(out). It catalyses the reaction L-glutamate(out) = L-glutamate(in). It carries out the reaction dopamine(out) = dopamine(in). The enzyme catalyses acetylcholine(in) = acetylcholine(out). The catalysed reaction is Fe(III)-[cytochrome c](out) = Fe(III)-[cytochrome c](in). It catalyses the reaction a 1,2-diacyl-sn-glycero-3-phosphocholine(in) = a 1,2-diacyl-sn-glycero-3-phosphocholine(out). It carries out the reaction a 1,2-diacyl-sn-glycero-3-phospho-L-serine(in) = a 1,2-diacyl-sn-glycero-3-phospho-L-serine(out). Inhibited by nitric oxide. Non-selective voltage-gated ion channel that mediates the transport of anions and cations through the mitochondrion outer membrane and plasma membrane. The channel at the outer mitochondrial membrane allows diffusion of small hydrophilic molecules; in the plasma membrane it is involved in cell volume regulation and apoptosis. It adopts an open conformation at low or zero membrane potential and a closed conformation at potentials above 30-40 mV. The open state has a weak anion selectivity whereas the closed state is cation-selective. Binds various signaling molecules, including the sphingolipid ceramide, the phospholipid phosphatidylcholine, and the sterols cholesterol and oxysterol. In depolarized mitochondria, acts downstream of PRKN and PINK1 to promote mitophagy or prevent apoptosis; polyubiquitination by PRKN promotes mitophagy, while monoubiquitination by PRKN decreases mitochondrial calcium influx which ultimately inhibits apoptosis. May participate in the formation of the permeability transition pore complex (PTPC) responsible for the release of mitochondrial products that triggers apoptosis. May mediate ATP export from cells. Part of a complex composed of HSPA9, ITPR1 and VDAC1 that regulates mitochondrial calcium-dependent apoptosis by facilitating calcium transport from the ER lumen to the mitochondria intermembrane space thus providing calcium for the downstream calcium channel MCU that directly releases it into mitochondria matrix. Mediates cytochrome c efflux. Its function is as follows. Catalyzes the scrambling of phospholipids across the outer mitochondrial membrane; the mechanism is unrelated to channel activity and is capable of translocating both anionic and zwitterionic phospholipids. This is Non-selective voltage-gated ion channel VDAC1 from Sus scrofa (Pig).